Reading from the N-terminus, the 309-residue chain is MAPKFPDCVEELRAAGNESFRNGQYAEASALYGRALRVLQAQGSSDPEEESVLYSNRAACHLKDGNCRDCIKDCTSALALVPFSIKPLLRRASAYEALEKYPMAYVDYKTVLQIDDSVTSALEGINRMTRALMDSLGPEWRLKLPSIPLVPVSAQKRWNSLPSENHKEMAKSKSKETTATKNRVPSAGDVEKAKVLKEEGNELVKKGNHKKAIEKYSESLLCSNLESATYSNRALCYLVLKQYTEAVKDCTEALKLDGKNVKAFYRRAQAHKALKDYKSSFADISNLLQIEPRNGPAQKLRQEVKQNLH.

TPR repeat units follow at residues 9–42, 51–84, and 86–118; these read VEEL…LQAQ, SVLY…VPFS, and KPLL…DDSV. The residue at position 160 (serine 160) is a Phosphoserine. The segment at 161-189 is disordered; it reads LPSENHKEMAKSKSKETTATKNRVPSAGD. The segment covering 164–178 has biased composition (basic and acidic residues); that stretch reads ENHKEMAKSKSKETT. A Phosphoserine modification is found at serine 186. 3 TPR repeats span residues 193 to 226, 227 to 260, and 262 to 294; these read AKVL…SNLE, SATY…DGKN, and KAFY…EPRN. A Glycyl lysine isopeptide (Lys-Gly) (interchain with G-Cter in SUMO2) cross-link involves residue lysine 197.

It belongs to the Tom34 family. In terms of assembly, interacts with HSP90A, VCP, ATP6V1D, KIAA0665, AMPK, and DMAP1 through its TPR repeat.

It localises to the cytoplasm. The protein localises to the mitochondrion outer membrane. Its function is as follows. Plays a role in the import of cytosolically synthesized preproteins into mitochondria. Binds the mature portion of precursor proteins. Interacts with cellular components, and possesses weak ATPase activity. May be a chaperone-like protein that helps to keep newly synthesized precursors in an unfolded import compatible state. The polypeptide is Mitochondrial import receptor subunit TOM34 (TOMM34) (Pongo abelii (Sumatran orangutan)).